A 313-amino-acid chain; its full sequence is Olfactory receptor 4E2 (313 aa).

The Extracellular segment spans residues 1 to 25; it reads MDSLNQTRVTEFVFLGLTDNRVLEM. N-linked (GlcNAc...) asparagine glycosylation is present at Asn5. The chain crosses the membrane as a helical span at residues 26-49; it reads LFFMAFSAIYMLTLSGNILIIIAT. The Cytoplasmic portion of the chain corresponds to 50–57; sequence VFTPSLHT. A helical membrane pass occupies residues 58–79; it reads PMYFFLSNLSFIDICHSSVTVP. Residues 80–100 are Extracellular-facing; the sequence is KMLEGLLLERKTISFDNCITQ. A disulfide bridge connects residues Cys97 and Cys179. Residues 101-120 traverse the membrane as a helical segment; that stretch reads LFFLHLFACAEIFLLIIVAY. 2 residues coordinate Cu cation: His105 and Cys109. Residues 121-139 are Cytoplasmic-facing; the sequence is DRYVAICTPLHYPNVMNMR. Residues 140-158 traverse the membrane as a helical segment; sequence VCIQLVFALWLGGTVHSLG. Residues 159 to 195 lie on the Extracellular side of the membrane; the sequence is QTFLTIRLPYCGPNIIDSYFCDVPLVIKLACTDTYLT. Residues 196 to 219 traverse the membrane as a helical segment; it reads GILIVTNSGTISLSCFLAVVTSYM. The Cytoplasmic portion of the chain corresponds to 220–235; the sequence is VILVSLRKHSAEGRQK. Residues 236-258 traverse the membrane as a helical segment; the sequence is ALSTCSAHFMVVALFFGPCIFIY. At 259–269 the chain is on the extracellular side; it reads TRPDTSFSIDK. Arg260 serves as a coordination point for Cu cation. A helical transmembrane segment spans residues 270-289; sequence VVSVFYTVVTPLLNPFIYTL. Residues 290-313 lie on the Cytoplasmic side of the membrane; that stretch reads RNEEVKSAMKQLRQRQVFFTKSYT.

Belongs to the G-protein coupled receptor 1 family.

It localises to the cell membrane. Its activity is regulated as follows. Copper binding enhances receptor activity in response to odorant binding. In terms of biological role, olfactory receptor that is activated by the binding of organosulfur odorants with thioether groups such as (methylthio)methanethiol (MTMT) and bis(methylthiomethyl) disulfide. Also binds odorants cis-cyclooctene and tert-butyl mercaptan. The activity of this receptor is mediated by G proteins which activate adenylyl cyclase. The protein is Olfactory receptor 4E2 of Homo sapiens (Human).